The sequence spans 181 residues: Protein Syd (181 aa).

The protein belongs to the Syd family.

It localises to the cell inner membrane. In terms of biological role, interacts with the SecY protein in vivo. May bind preferentially to an uncomplexed state of SecY, thus functioning either as a chelating agent for excess SecY in the cell or as a regulatory factor that negatively controls the translocase function. The chain is Protein Syd from Salmonella arizonae (strain ATCC BAA-731 / CDC346-86 / RSK2980).